The following is a 465-amino-acid chain: Ribulose bisphosphate carboxylase large chain (465 aa).

N6,N6,N6-trimethyllysine is present on lysine 4. Substrate is bound by residues residue 113 and threonine 163. The Proton acceptor role is filled by lysine 165. Lysine 167 is a binding site for substrate. Residues lysine 191, aspartate 193, and glutamate 194 each coordinate Mg(2+). N6-carboxylysine is present on lysine 191. Histidine 284 acts as the Proton acceptor in catalysis. Residues arginine 285, histidine 317, and serine 369 each coordinate substrate.

The protein belongs to the RuBisCO large chain family. Type I subfamily. Heterohexadecamer of 8 large chains and 8 small chains; disulfide-linked. The disulfide link is formed within the large subunit homodimers. It depends on Mg(2+) as a cofactor. Post-translationally, the disulfide bond which can form in the large chain dimeric partners within the hexadecamer appears to be associated with oxidative stress and protein turnover.

It is found in the plastid. The protein resides in the chloroplast. The catalysed reaction is 2 (2R)-3-phosphoglycerate + 2 H(+) = D-ribulose 1,5-bisphosphate + CO2 + H2O. The enzyme catalyses D-ribulose 1,5-bisphosphate + O2 = 2-phosphoglycolate + (2R)-3-phosphoglycerate + 2 H(+). In terms of biological role, ruBisCO catalyzes two reactions: the carboxylation of D-ribulose 1,5-bisphosphate, the primary event in carbon dioxide fixation, as well as the oxidative fragmentation of the pentose substrate in the photorespiration process. Both reactions occur simultaneously and in competition at the same active site. This is Ribulose bisphosphate carboxylase large chain from Cornus obliqua (Silky dogwood).